The following is a 75-amino-acid chain: uncharacterized protein (75 aa).

Residues 7-26 (ATAPLFVIVGLAVVLTGATG) form a helical membrane-spanning segment.

The protein resides in the membrane. This is an uncharacterized protein from Dictyostelium discoideum (Social amoeba).